Here is a 339-residue protein sequence, read N- to C-terminus: Fructose-1,6-bisphosphatase, cytosolic (339 aa).

Glutamate 70, glutamate 99, aspartate 120, leucine 122, and aspartate 123 together coordinate Mg(2+). Substrate is bound by residues aspartate 123–serine 126, asparagine 214, tyrosine 246, tyrosine 266, and lysine 276. Residue glutamate 282 participates in Mg(2+) binding.

This sequence belongs to the FBPase class 1 family. The cofactor is Mg(2+).

It localises to the cytoplasm. It catalyses the reaction beta-D-fructose 1,6-bisphosphate + H2O = beta-D-fructose 6-phosphate + phosphate. This is Fructose-1,6-bisphosphatase, cytosolic from Brassica napus (Rape).